Consider the following 352-residue polypeptide: uncharacterized protein (352 aa).

A run of 8 helical transmembrane segments spans residues phenylalanine 6–proline 26, phenylalanine 30–isoleucine 50, isoleucine 76–isoleucine 96, glutamate 151–leucine 171, phenylalanine 197–isoleucine 217, valine 226–leucine 246, tryptophan 291–alanine 311, and leucine 330–phenylalanine 350.

The protein belongs to the CitM (TC 2.A.11) transporter family.

The protein localises to the cell membrane. This is an uncharacterized protein from Methanocaldococcus jannaschii (strain ATCC 43067 / DSM 2661 / JAL-1 / JCM 10045 / NBRC 100440) (Methanococcus jannaschii).